We begin with the raw amino-acid sequence, 87 residues long: UPF0237 protein YjhC (87 aa).

The ACT domain occupies 4 to 76 (VVTVVGADKI…EALGVNIHVQ (73 aa)).

This sequence belongs to the UPF0237 family.

The sequence is that of UPF0237 protein YjhC (yjhC) from Lactococcus lactis subsp. lactis (strain IL1403) (Streptococcus lactis).